A 452-amino-acid polypeptide reads, in one-letter code: Mitochondrial import inner membrane translocase subunit TIM44 (452 aa).

Threonine 128 carries the phosphothreonine modification. 166–173 contributes to the ATP binding site; it reads GGEKLGRT. Serine 180 is subject to Phosphoserine. Lysine 217 is modified (N6-succinyllysine).

Belongs to the Tim44 family. In terms of assembly, probable component of the PAM complex at least composed of a mitochondrial HSP70 protein, GRPEL1 or GRPEL2, TIMM44, TIMM16/PAM16 and TIMM14/DNAJC19. The complex interacts with the TIMM23 component of the TIM23 complex. Interacts with SLC25A4/ANT1 and SLC25A5/ANT2; leading to inhibit the presequence translocase TIMM23, thereby promoting stabilization of PINK1.

It localises to the mitochondrion inner membrane. The protein resides in the mitochondrion matrix. Essential component of the PAM complex, a complex required for the translocation of transit peptide-containing proteins from the inner membrane into the mitochondrial matrix in an ATP-dependent manner. Recruits mitochondrial HSP70 to drive protein translocation into the matrix using ATP as an energy source. The sequence is that of Mitochondrial import inner membrane translocase subunit TIM44 (TIMM44) from Homo sapiens (Human).